The following is a 281-amino-acid chain: Pantothenate synthetase (281 aa).

31 to 38 (MGNLHAGH) is an ATP binding site. The Proton donor role is filled by histidine 38. A (R)-pantoate-binding site is contributed by glutamine 62. Residue glutamine 62 participates in beta-alanine binding. Position 150 to 153 (150 to 153 (GKKD)) interacts with ATP. Glutamine 156 contributes to the (R)-pantoate binding site. ATP is bound by residues valine 179 and 187–190 (MSSR).

Belongs to the pantothenate synthetase family. As to quaternary structure, homodimer.

The protein resides in the cytoplasm. The catalysed reaction is (R)-pantoate + beta-alanine + ATP = (R)-pantothenate + AMP + diphosphate + H(+). Its pathway is cofactor biosynthesis; (R)-pantothenate biosynthesis; (R)-pantothenate from (R)-pantoate and beta-alanine: step 1/1. Catalyzes the condensation of pantoate with beta-alanine in an ATP-dependent reaction via a pantoyl-adenylate intermediate. In Xylella fastidiosa (strain M23), this protein is Pantothenate synthetase.